The sequence spans 949 residues: Protein translocase subunit SecA 1 (949 aa).

Residues Gln86, 104 to 108, and Asp493 each bind ATP; that span reads GEGKT. Positions 869–949 are disordered; it reads VDGGARERAP…AKPPKSVKKR (81 aa). Residues 925–934 show a composition bias toward basic and acidic residues; sequence SRRERREAAR.

This sequence belongs to the SecA family. In terms of assembly, monomer and homodimer. Part of the essential Sec protein translocation apparatus which comprises SecA, SecYEG and auxiliary proteins SecDF. Other proteins may also be involved.

The protein resides in the cell membrane. The protein localises to the cytoplasm. It carries out the reaction ATP + H2O + cellular proteinSide 1 = ADP + phosphate + cellular proteinSide 2.. In terms of biological role, part of the Sec protein translocase complex. Interacts with the SecYEG preprotein conducting channel. Has a central role in coupling the hydrolysis of ATP to the transfer of proteins into and across the cell membrane, serving as an ATP-driven molecular motor driving the stepwise translocation of polypeptide chains across the membrane. This is Protein translocase subunit SecA 1 from Mycobacterium bovis (strain ATCC BAA-935 / AF2122/97).